The primary structure comprises 66 residues: Large ribosomal subunit protein uL29 (66 aa).

The protein belongs to the universal ribosomal protein uL29 family.

This chain is Large ribosomal subunit protein uL29, found in Bacillus anthracis (strain CDC 684 / NRRL 3495).